Consider the following 501-residue polypeptide: Pyruvate kinase 1 (501 aa).

R50 is a substrate binding site. 4 residues coordinate K(+): N52, S54, D85, and T86. Residue N52–H55 coordinates ATP. ATP is bound by residues R92 and K178. E243 contacts Mg(2+). Substrate-binding residues include G266, D267, and T299. A Mg(2+)-binding site is contributed by D267.

It belongs to the pyruvate kinase family. Homotetramer. Mg(2+) is required as a cofactor. The cofactor is K(+).

It carries out the reaction pyruvate + ATP = phosphoenolpyruvate + ADP + H(+). It functions in the pathway carbohydrate degradation; glycolysis; pyruvate from D-glyceraldehyde 3-phosphate: step 5/5. This chain is Pyruvate kinase 1 (PYK1), found in Candida glabrata (strain ATCC 2001 / BCRC 20586 / JCM 3761 / NBRC 0622 / NRRL Y-65 / CBS 138) (Yeast).